Consider the following 150-residue polypeptide: Soluble pyridine nucleotide transhydrogenase (150 aa).

It belongs to the class-I pyridine nucleotide-disulfide oxidoreductase family. It depends on FAD as a cofactor.

Its subcellular location is the cytoplasm. The catalysed reaction is NAD(+) + NADPH = NADH + NADP(+). In terms of biological role, conversion of NADPH, generated by peripheral catabolic pathways, to NADH, which can enter the respiratory chain for energy generation. The polypeptide is Soluble pyridine nucleotide transhydrogenase (sthA) (Pectobacterium carotovorum subsp. carotovorum (Erwinia carotovora subsp. carotovora)).